The chain runs to 312 residues: Calcium-independent mitochondrial carrier protein SCaMC-3L (312 aa).

Solcar repeat units follow at residues 27-113 (GTLW…SKNF), 121-206 (QLFQ…LQCL), and 217-304 (PSGL…MKKT). 6 helical membrane-spanning segments follow: residues 33-50 (LLSG…TAPL), 88-107 (GNGI…FSVC), 131-144 (SLAV…INPM), 182-200 (YLPN…LAVY), 219-243 (GLVS…LTLV), and 279-298 (GMTP…YLVY).

It belongs to the mitochondrial carrier (TC 2.A.29) family. In terms of tissue distribution, mainly expressed in testis and at lesser levels in brain.

It localises to the mitochondrion inner membrane. It carries out the reaction Mg(2+)(out) + phosphate(in) + ATP(out) = Mg(2+)(in) + phosphate(out) + ATP(in). It catalyses the reaction ADP(out) + phosphate(in) + H(+)(out) = ADP(in) + phosphate(out) + H(+)(in). Functionally, calcium-independent ATP-Mg/Pi exchanger that catalyzes the electroneutral exchange of Mg-ATP or free ADP against an hydrogenphosphate and participates in the net transport of adenine nucleotides across the mitochondria inner membrane. The protein is Calcium-independent mitochondrial carrier protein SCaMC-3L of Mus musculus (Mouse).